The sequence spans 443 residues: MSEMTPPQIVSELNKFIIGQEQAKKAVAIALRNRWRRMQLNNELRHEITPKNILMIGPTGVGKTEIARRLAKLANSPFIKVEATKFTEVGYVGKEVDSIIRDLTDAAIKMIRVKNIEKNKLRVEEIVEERILDVLVPRPKNNWTENEKNESLLNTLQVFRKKLREGILDEKEIEINVLASTMGVEIMAPPGMEELTSQLQSLFQNLGGHKKNTRRLKIKDAVLLLKEEEAAKLINQEEIKKEAINAVEQNGIVFVDEIDKICKRRDSSGPDVSREGVQRDLLPLVEGCTVSTKYGMVKTDHILFIASGAFQTSTPSDLIPELQGRLPIKVELQPLTINDFEKILTEPTASITAQYKALMKTEGVCINFTKEGIRNIAEAAWKVNESMENIGARRLHTILEKLMEDISFNACDNVGKTIEINSEYVGKHLDQLISNEDLGRFIL.

Residues isoleucine 18, 60-65, aspartate 256, glutamate 321, and arginine 393 each bind ATP; that span reads GVGKTE.

It belongs to the ClpX chaperone family. HslU subfamily. In terms of assembly, a double ring-shaped homohexamer of HslV is capped on each side by a ring-shaped HslU homohexamer. The assembly of the HslU/HslV complex is dependent on binding of ATP.

It localises to the cytoplasm. In terms of biological role, ATPase subunit of a proteasome-like degradation complex; this subunit has chaperone activity. The binding of ATP and its subsequent hydrolysis by HslU are essential for unfolding of protein substrates subsequently hydrolyzed by HslV. HslU recognizes the N-terminal part of its protein substrates and unfolds these before they are guided to HslV for hydrolysis. In Buchnera aphidicola subsp. Schizaphis graminum (strain Sg), this protein is ATP-dependent protease ATPase subunit HslU.